The chain runs to 440 residues: (S)-N-methylcoclaurine 3'-hydroxylase-like protein (440 aa).

Residues 2–21 (EIVTVALIAIVFTTFLYLIV) traverse the membrane as a helical; Signal-anchor for type II membrane protein segment. Residue C430 participates in heme binding.

This sequence belongs to the cytochrome P450 family. Requires heme as cofactor.

The protein resides in the membrane. Its function is as follows. Involved in the biosynthesis of benzylisoquinoline alkaloids. Probably involved in papaverine biosynthesis since its transcripts are abundant only in cultivars with substantial papaverine accumulation. May catalyze the 3'-hydroxylation of (S)-coclaurine. The protein is (S)-N-methylcoclaurine 3'-hydroxylase-like protein of Papaver somniferum (Opium poppy).